A 320-amino-acid polypeptide reads, in one-letter code: Histidine decarboxylase proenzyme (320 aa).

Residues 2-11 (NKNLEANRNR) constitute a propeptide that is removed on maturation. Serine 98 carries the post-translational modification Pyruvic acid (Ser). Glutamate 215 functions as the Proton donor in the catalytic mechanism.

The proenzyme is a hexamer of identical pi chains; each pi chain monomer is cleaved to form a small (or beta) chain and a large (or alpha) chain by non-hydrolytic self-catalysis. The cofactor is pyruvate.

It catalyses the reaction L-histidine + H(+) = histamine + CO2. The sequence is that of Histidine decarboxylase proenzyme (hdc) from Clostridium perfringens (strain ATCC 13124 / DSM 756 / JCM 1290 / NCIMB 6125 / NCTC 8237 / Type A).